A 77-amino-acid chain; its full sequence is Small ribosomal subunit protein bS18 (77 aa).

It belongs to the bacterial ribosomal protein bS18 family. Part of the 30S ribosomal subunit. Forms a tight heterodimer with protein bS6.

Its function is as follows. Binds as a heterodimer with protein bS6 to the central domain of the 16S rRNA, where it helps stabilize the platform of the 30S subunit. This chain is Small ribosomal subunit protein bS18, found in Desulforamulus reducens (strain ATCC BAA-1160 / DSM 100696 / MI-1) (Desulfotomaculum reducens).